We begin with the raw amino-acid sequence, 267 residues long: Interleukin-1 alpha (267 aa).

A propeptide spanning residues 1-112 (MAKVPDLFED…DPEEGIIKPR (112 aa)) is cleaved from the precursor. N-linked (GlcNAc...) asparagine glycosylation is present at Asn64. Lys82 carries the post-translational modification N6-acetyllysine. The segment at 82-86 (KKRRL) is nuclear localization signal (NLS). Ser87 carries the post-translational modification Phosphoserine. Residues Asn100 and Asn141 are each glycosylated (N-linked (GlcNAc...) asparagine).

Belongs to the IL-1 family. As to quaternary structure, monomer. Interacts with TMED10; the interaction mediates the translocation from the cytoplasm into the ERGIC (endoplasmic reticulum-Golgi intermediate compartment) and thereby secretion. Interacts with IL1R1. Interacts with S100A13; this interaction is the first step in the export of IL1A, followed by direct translocation of this complex across the plasma membrane. In terms of processing, acetylated within its nuclear localization sequence, which impacts subcellular localization. Post-translationally, proteolytic processed by CAPN1 in a calcium-dependent manner. Cleavage from 31 kDa precursor to 18 kDa biologically active molecules. Phosphorylated. Phosphorylation greatly enhances susceptibility to digestion and promotes the conversion of pre-IL1A alpha to the biologically active IL1A.

The protein resides in the nucleus. It is found in the cytoplasm. The protein localises to the secreted. In terms of biological role, cytokine constitutively present intracellularly in nearly all resting non-hematopoietic cells that plays an important role in inflammation and bridges the innate and adaptive immune systems. After binding to its receptor IL1R1 together with its accessory protein IL1RAP, forms the high affinity interleukin-1 receptor complex. Signaling involves the recruitment of adapter molecules such as MYD88, IRAK1 or IRAK4. In turn, mediates the activation of NF-kappa-B and the three MAPK pathways p38, p42/p44 and JNK pathways. Within the cell, acts as an alarmin and cell death results in its liberation in the extracellular space after disruption of the cell membrane to induce inflammation and alert the host to injury or damage. In addition to its role as a danger signal, which occurs when the cytokine is passively released by cell necrosis, directly senses DNA damage and acts as signal for genotoxic stress without loss of cell integrity. The sequence is that of Interleukin-1 alpha (IL1A) from Oryctolagus cuniculus (Rabbit).